Consider the following 207-residue polypeptide: MNVARFLVEKHTLHVIIDFILSKVSNQQSNLAQHQRVYTGEKPYKCNEWGKALSGKSSLFYHQAIHGVGKLCKCNDCHKVFSNATTIANHWRIHNEDRSYKCNKCGKIFRHRSYLAVYQRTHTGEKPYKYHDCGKVFSQASSYAKHRRIHTGEKPHKCDDCGKVLTSRSHLIRHQRIHTGQKSYKCLKCGKVFSLWALHAEHQKIHF.

Residues Cys-72–His-94 form a C2H2-type 1 zinc finger. A C2H2-type 2; degenerate zinc finger spans residues Tyr-100–His-122. The C2H2-type 3; degenerate zinc-finger motif lies at Tyr-128–His-150. C2H2-type zinc fingers lie at residues His-156–His-178 and Tyr-184–His-206.

This sequence belongs to the krueppel C2H2-type zinc-finger protein family.

It is found in the nucleus. Its function is as follows. May be involved in transcriptional regulation. The chain is Putative zinc finger protein 137 (ZNF137P) from Homo sapiens (Human).